A 557-amino-acid chain; its full sequence is 2,3-bisphosphoglycerate-independent phosphoglycerate mutase 1 (557 aa).

Mn(2+)-binding residues include D27 and S80. Residue S80 is the Phosphoserine intermediate of the active site. Substrate contacts are provided by residues H139, 169–170, R205, R212, 285–288, and K360; these read RD and RADR. Positions 429, 433, 470, 471, and 500 each coordinate Mn(2+).

Belongs to the BPG-independent phosphoglycerate mutase family. As to quaternary structure, monomer. Mn(2+) serves as cofactor.

The protein localises to the cytoplasm. The catalysed reaction is (2R)-2-phosphoglycerate = (2R)-3-phosphoglycerate. It participates in carbohydrate degradation; glycolysis; pyruvate from D-glyceraldehyde 3-phosphate: step 3/5. Functionally, catalyzes the interconversion of 2-phosphoglycerate (2-PGA) and 3-phosphoglycerate (3-PGA). Required for guard cell function (e.g. blue light-, abscisic acid- (ABA), and low CO(2)-regulated stomatal movements) and fertility (e.g. pollen grains production). The chain is 2,3-bisphosphoglycerate-independent phosphoglycerate mutase 1 (PGM1) from Arabidopsis thaliana (Mouse-ear cress).